A 216-amino-acid chain; its full sequence is ADP-ribosylation factor D (216 aa).

Positions 188–204 (SKFSFSNKSKQQKSNSQ) are enriched in low complexity. A disordered region spans residues 188 to 216 (SKFSFSNKSKQQKSNSQPNTPRKNIQMMT). The span at 205–216 (PNTPRKNIQMMT) shows a compositional bias: polar residues.

Belongs to the small GTPase superfamily. Arf family.

The protein resides in the golgi apparatus. Its function is as follows. GTP-binding protein involved in protein trafficking; may modulate vesicle budding and uncoating within the Golgi apparatus. In Dictyostelium discoideum (Social amoeba), this protein is ADP-ribosylation factor D (arrD).